The chain runs to 289 residues: Phosphatidylserine decarboxylase proenzyme (289 aa).

Catalysis depends on charge relay system; for autoendoproteolytic cleavage activity residues Asp-92, His-149, and Ser-254. Catalysis depends on Ser-254, which acts as the Schiff-base intermediate with substrate; via pyruvic acid; for decarboxylase activity. Pyruvic acid (Ser); by autocatalysis is present on Ser-254.

The protein belongs to the phosphatidylserine decarboxylase family. PSD-B subfamily. Prokaryotic type I sub-subfamily. Heterodimer of a large membrane-associated beta subunit and a small pyruvoyl-containing alpha subunit. The cofactor is pyruvate. Is synthesized initially as an inactive proenzyme. Formation of the active enzyme involves a self-maturation process in which the active site pyruvoyl group is generated from an internal serine residue via an autocatalytic post-translational modification. Two non-identical subunits are generated from the proenzyme in this reaction, and the pyruvate is formed at the N-terminus of the alpha chain, which is derived from the carboxyl end of the proenzyme. The autoendoproteolytic cleavage occurs by a canonical serine protease mechanism, in which the side chain hydroxyl group of the serine supplies its oxygen atom to form the C-terminus of the beta chain, while the remainder of the serine residue undergoes an oxidative deamination to produce ammonia and the pyruvoyl prosthetic group on the alpha chain. During this reaction, the Ser that is part of the protease active site of the proenzyme becomes the pyruvoyl prosthetic group, which constitutes an essential element of the active site of the mature decarboxylase.

The protein resides in the cell membrane. It catalyses the reaction a 1,2-diacyl-sn-glycero-3-phospho-L-serine + H(+) = a 1,2-diacyl-sn-glycero-3-phosphoethanolamine + CO2. The protein operates within phospholipid metabolism; phosphatidylethanolamine biosynthesis; phosphatidylethanolamine from CDP-diacylglycerol: step 2/2. In terms of biological role, catalyzes the formation of phosphatidylethanolamine (PtdEtn) from phosphatidylserine (PtdSer). In Pseudomonas paraeruginosa (strain DSM 24068 / PA7) (Pseudomonas aeruginosa (strain PA7)), this protein is Phosphatidylserine decarboxylase proenzyme.